Consider the following 266-residue polypeptide: MSEAESTPVEEPVVESTEGSEAIPEVEQSTPLVSGLTLEHCGGRYRLTLPSDLDWIDLWPQLQLYLVGQEHLWSETLPVDCACGQRLLDQSQLQQLAEALSEHQLRLDRIITGRRQTAIAAATLGYSVQQEELPPLLVKEADGPSQATANPLYLKTTLRSGIEIHHDASVIIVGDVNAGASIIAAGDIIVWGRLRGVAHAGAKGNLGARIMTLEMAATQLRIADLLARTPDPPRPPYPEVAYATDQGIQIAPAYTWGRVFAVSAAP.

Over residues 1 to 21 (MSEAESTPVEEPVVESTEGSE) the composition is skewed to low complexity. The disordered stretch occupies residues 1–28 (MSEAESTPVEEPVVESTEGSEAIPEVEQ).

The protein belongs to the MinC family. Interacts with MinD and FtsZ.

Cell division inhibitor that blocks the formation of polar Z ring septums. Rapidly oscillates between the poles of the cell to destabilize FtsZ filaments that have formed before they mature into polar Z rings. Prevents FtsZ polymerization. The protein is Probable septum site-determining protein MinC of Thermosynechococcus vestitus (strain NIES-2133 / IAM M-273 / BP-1).